The primary structure comprises 417 residues: NADH-quinone oxidoreductase subunit D (417 aa).

This sequence belongs to the complex I 49 kDa subunit family. In terms of assembly, NDH-1 is composed of 14 different subunits. Subunits NuoB, C, D, E, F, and G constitute the peripheral sector of the complex.

It localises to the cell inner membrane. The catalysed reaction is a quinone + NADH + 5 H(+)(in) = a quinol + NAD(+) + 4 H(+)(out). Its function is as follows. NDH-1 shuttles electrons from NADH, via FMN and iron-sulfur (Fe-S) centers, to quinones in the respiratory chain. The immediate electron acceptor for the enzyme in this species is believed to be ubiquinone. Couples the redox reaction to proton translocation (for every two electrons transferred, four hydrogen ions are translocated across the cytoplasmic membrane), and thus conserves the redox energy in a proton gradient. This Paraburkholderia phymatum (strain DSM 17167 / CIP 108236 / LMG 21445 / STM815) (Burkholderia phymatum) protein is NADH-quinone oxidoreductase subunit D.